Here is a 122-residue protein sequence, read N- to C-terminus: Early nodulin-10 (122 aa).

A signal peptide spans 1–36 (MTCTLKSPPKMASFFLSSLVLMFIAALILLPQGLAA). Tandem repeats lie at residues 45 to 49 (PPDSE), 51 to 55 (PPYRN), 58 to 62 (PPFAL), 68 to 72 (APIYK), 77 to 81 (PPIYN), 82 to 86 (PPIYE), 88 to 92 (PPTYK), 99 to 103 (PPPFQ), 106 to 110 (PPFYK), and 113 to 117 (PPSQK). The interval 45 to 117 (PPDSELPPYR…FYKQAPPSQK (73 aa)) is 10 X 5 AA approximate repeats of P-P-X-X-X. The disordered stretch occupies residues 90 to 122 (TYKPSKKRLPPPFQKLPPFYKQAPPSQKLPRVN).

Root nodules. In early nodules, expressed only in the interior of the developing nodule with no expression in other nodule tissues, including meristem. In slightly older nodules, expressed in almost all cells of the central zone. In more mature nodules, expression is restricted to the invasion zone.

This is Early nodulin-10 (ENOD10) from Medicago sativa (Alfalfa).